Here is a 609-residue protein sequence, read N- to C-terminus: Threonine--tRNA ligase (609 aa).

The tract at residues 1-143 (MRVLYLHTER…SFKPGDSRAE (143 aa)) is editing domain. Catalytic stretches follow at residues 195–491 (PRYL…PRLP) and 196–491 (RYLE…PRLP). Zn(2+) contacts are provided by Cys-288, His-339, and His-460.

Belongs to the class-II aminoacyl-tRNA synthetase family. In terms of assembly, homodimer. Requires Zn(2+) as cofactor.

It is found in the cytoplasm. It carries out the reaction tRNA(Thr) + L-threonine + ATP = L-threonyl-tRNA(Thr) + AMP + diphosphate + H(+). In terms of biological role, catalyzes the attachment of threonine to tRNA(Thr) in a two-step reaction: L-threonine is first activated by ATP to form Thr-AMP and then transferred to the acceptor end of tRNA(Thr). Also edits incorrectly charged L-seryl-tRNA(Thr). This chain is Threonine--tRNA ligase, found in Pyrobaculum neutrophilum (strain DSM 2338 / JCM 9278 / NBRC 100436 / V24Sta) (Thermoproteus neutrophilus).